A 390-amino-acid chain; its full sequence is 3-ketoacyl-CoA thiolase (390 aa).

The active-site Acyl-thioester intermediate is the cysteine 95. Catalysis depends on proton acceptor residues histidine 346 and cysteine 376.

It belongs to the thiolase-like superfamily. Thiolase family. Heterotetramer of two alpha chains (FadB) and two beta chains (FadA).

The protein localises to the cytoplasm. The catalysed reaction is an acyl-CoA + acetyl-CoA = a 3-oxoacyl-CoA + CoA. Its pathway is lipid metabolism; fatty acid beta-oxidation. Its function is as follows. Catalyzes the final step of fatty acid oxidation in which acetyl-CoA is released and the CoA ester of a fatty acid two carbons shorter is formed. This Acinetobacter baumannii (strain AB307-0294) protein is 3-ketoacyl-CoA thiolase.